The chain runs to 345 residues: Biotin synthase (345 aa).

Positions 66-293 (NTVQLSTLLS…RAMVRLSAGR (228 aa)) constitute a Radical SAM core domain. 3 residues coordinate [4Fe-4S] cluster: Cys-81, Cys-85, and Cys-88. Cys-125, Cys-156, Cys-216, and Arg-288 together coordinate [2Fe-2S] cluster.

This sequence belongs to the radical SAM superfamily. Biotin synthase family. Homodimer. [4Fe-4S] cluster is required as a cofactor. [2Fe-2S] cluster serves as cofactor.

The enzyme catalyses (4R,5S)-dethiobiotin + (sulfur carrier)-SH + 2 reduced [2Fe-2S]-[ferredoxin] + 2 S-adenosyl-L-methionine = (sulfur carrier)-H + biotin + 2 5'-deoxyadenosine + 2 L-methionine + 2 oxidized [2Fe-2S]-[ferredoxin]. The protein operates within cofactor biosynthesis; biotin biosynthesis; biotin from 7,8-diaminononanoate: step 2/2. Its function is as follows. Catalyzes the conversion of dethiobiotin (DTB) to biotin by the insertion of a sulfur atom into dethiobiotin via a radical-based mechanism. The polypeptide is Biotin synthase (Cupriavidus metallidurans (strain ATCC 43123 / DSM 2839 / NBRC 102507 / CH34) (Ralstonia metallidurans)).